The chain runs to 224 residues: Ribose-5-phosphate isomerase A (224 aa).

Substrate is bound by residues Thr34–Thr37, Asp87–Asp90, and Lys100–Gly103. The active-site Proton acceptor is the Glu109. Lys127 contacts substrate.

This sequence belongs to the ribose 5-phosphate isomerase family. Homodimer.

The enzyme catalyses aldehydo-D-ribose 5-phosphate = D-ribulose 5-phosphate. The protein operates within carbohydrate degradation; pentose phosphate pathway; D-ribose 5-phosphate from D-ribulose 5-phosphate (non-oxidative stage): step 1/1. Its function is as follows. Catalyzes the reversible conversion of ribose-5-phosphate to ribulose 5-phosphate. In Francisella tularensis subsp. tularensis (strain FSC 198), this protein is Ribose-5-phosphate isomerase A.